Consider the following 532-residue polypeptide: Developmental and secondary metabolism regulator ve1 (532 aa).

In terms of domain architecture, Velvet spans 26–220 (NRSLWYQLTV…ADQGCRVRIR (195 aa)). A Nuclear localization signal motif is present at residues 40 to 45 (ERARAC). The segment covering 217 to 229 (VRIRRDVRMRKRD) has biased composition (basic residues). 2 disordered regions span residues 217–440 (VRIR…TEPS) and 458–520 (PQVD…RADG). Residues 233–250 (GGNNNNNNNAGNNAGNNG) are compositionally biased toward low complexity. 2 stretches are compositionally biased toward basic and acidic residues: residues 251–260 (FERREEDFGR) and 283–294 (SEHRASYSDVSR). Residues 302 to 317 (YPPPPPPPPSYDPTPS) show a composition bias toward pro residues. A compositionally biased stretch (low complexity) spans 397 to 411 (STSTYVPPSPSVYST). The segment at 435 to 463 (MNTEPSRGSIKISALVEPMPVIEPQVDPL) is PEST. Residues 481–493 (FAQNTRPLFNGQR) are compositionally biased toward polar residues.

This sequence belongs to the velvet family. VeA subfamily. As to quaternary structure, component of the heterotrimeric velvet complex composed of laeA, ve1 and velB; Ve1 acting as a bridging protein between laeA and velB. Interacts directly with laeA and velB.

The protein resides in the nucleus. The protein localises to the cytoplasm. In terms of biological role, component of the velvet transcription factor complex that controls sexual/asexual developmental ratio in response to light, promoting sexual development in the darkness while stimulating asexual sporulation under illumination. The velvet complex hat acts as a global regulator for secondary metabolite gene expression. Controls the expression of the aurofusarin and trichothecene gene clusters. Also controls the expression of the deoxynivalenol (DON) gene cluster. Regulates hyphal growth and pigment formation. Acts as a positive regulator of virulence. The chain is Developmental and secondary metabolism regulator ve1 from Gibberella zeae (strain ATCC MYA-4620 / CBS 123657 / FGSC 9075 / NRRL 31084 / PH-1) (Wheat head blight fungus).